The sequence spans 725 residues: Phosphoribosylformylglycinamidine synthase subunit PurL (725 aa).

His41 is an active-site residue. ATP contacts are provided by Tyr44 and Lys83. Glu85 lines the Mg(2+) pocket. Residues 86–89 and Arg108 each bind substrate; that span reads SHNH. The active-site Proton acceptor is the His87. Residue Asp109 coordinates Mg(2+). A substrate-binding site is contributed by Gln231. Asp259 is a Mg(2+) binding site. 303–305 contributes to the substrate binding site; that stretch reads ESQ. The ATP site is built by Asp485 and Gly522. Residue Asn523 coordinates Mg(2+). Ser525 contacts substrate.

The protein belongs to the FGAMS family. As to quaternary structure, monomer. Part of the FGAM synthase complex composed of 1 PurL, 1 PurQ and 2 PurS subunits.

The protein resides in the cytoplasm. It catalyses the reaction N(2)-formyl-N(1)-(5-phospho-beta-D-ribosyl)glycinamide + L-glutamine + ATP + H2O = 2-formamido-N(1)-(5-O-phospho-beta-D-ribosyl)acetamidine + L-glutamate + ADP + phosphate + H(+). It participates in purine metabolism; IMP biosynthesis via de novo pathway; 5-amino-1-(5-phospho-D-ribosyl)imidazole from N(2)-formyl-N(1)-(5-phospho-D-ribosyl)glycinamide: step 1/2. Functionally, part of the phosphoribosylformylglycinamidine synthase complex involved in the purines biosynthetic pathway. Catalyzes the ATP-dependent conversion of formylglycinamide ribonucleotide (FGAR) and glutamine to yield formylglycinamidine ribonucleotide (FGAM) and glutamate. The FGAM synthase complex is composed of three subunits. PurQ produces an ammonia molecule by converting glutamine to glutamate. PurL transfers the ammonia molecule to FGAR to form FGAM in an ATP-dependent manner. PurS interacts with PurQ and PurL and is thought to assist in the transfer of the ammonia molecule from PurQ to PurL. The sequence is that of Phosphoribosylformylglycinamidine synthase subunit PurL from Thermus thermophilus (strain ATCC BAA-163 / DSM 7039 / HB27).